Consider the following 314-residue polypeptide: tRNA pseudouridine synthase B (314 aa).

His-43 serves as a coordination point for substrate. The active-site Nucleophile is Asp-48. 3 residues coordinate substrate: Tyr-76, Tyr-179, and Leu-200.

This sequence belongs to the pseudouridine synthase TruB family. Type 1 subfamily.

The enzyme catalyses uridine(55) in tRNA = pseudouridine(55) in tRNA. Responsible for synthesis of pseudouridine from uracil-55 in the psi GC loop of transfer RNAs. The chain is tRNA pseudouridine synthase B from Salmonella arizonae (strain ATCC BAA-731 / CDC346-86 / RSK2980).